Consider the following 271-residue polypeptide: tRNA pseudouridine synthase A (271 aa).

The active-site Nucleophile is the Asp-52. Residue Tyr-110 coordinates substrate.

Belongs to the tRNA pseudouridine synthase TruA family. As to quaternary structure, homodimer.

The enzyme catalyses uridine(38/39/40) in tRNA = pseudouridine(38/39/40) in tRNA. Formation of pseudouridine at positions 38, 39 and 40 in the anticodon stem and loop of transfer RNAs. The protein is tRNA pseudouridine synthase A of Burkholderia mallei (strain NCTC 10247).